A 305-amino-acid polypeptide reads, in one-letter code: tRNA dimethylallyltransferase (305 aa).

8 to 15 (GPTASGKT) lines the ATP pocket. 10–15 (TASGKT) is a substrate binding site. The tract at residues 33-36 (DSQQ) is interaction with substrate tRNA.

This sequence belongs to the IPP transferase family. Monomer. It depends on Mg(2+) as a cofactor.

It catalyses the reaction adenosine(37) in tRNA + dimethylallyl diphosphate = N(6)-dimethylallyladenosine(37) in tRNA + diphosphate. In terms of biological role, catalyzes the transfer of a dimethylallyl group onto the adenine at position 37 in tRNAs that read codons beginning with uridine, leading to the formation of N6-(dimethylallyl)adenosine (i(6)A). The polypeptide is tRNA dimethylallyltransferase (Anaeromyxobacter dehalogenans (strain 2CP-1 / ATCC BAA-258)).